A 332-amino-acid polypeptide reads, in one-letter code: Cell division protein ZipA (332 aa).

At 1–6 (MMQDLR) the chain is on the periplasmic side. The helical transmembrane segment at 7–27 (LILIVVGAIAIIALLLHGLWT) threads the bilayer. Residues 28 to 332 (SRKERSSLFR…RIRDVLKANA (305 aa)) lie on the Cytoplasmic side of the membrane. Over residues 40 to 51 (PVKRAKKARDET) the composition is skewed to basic and acidic residues. The disordered stretch occupies residues 40 to 189 (PVKRAKKARD…VQPAPQQPAE (150 aa)). Residues 76-88 (SFDSASVDSSSFD) show a composition bias toward low complexity. Over residues 93–105 (AREDVRSEAKSPF) the composition is skewed to basic and acidic residues.

It belongs to the ZipA family. As to quaternary structure, interacts with FtsZ via their C-terminal domains.

The protein resides in the cell inner membrane. Its function is as follows. Essential cell division protein that stabilizes the FtsZ protofilaments by cross-linking them and that serves as a cytoplasmic membrane anchor for the Z ring. Also required for the recruitment to the septal ring of downstream cell division proteins. In Pectobacterium atrosepticum (strain SCRI 1043 / ATCC BAA-672) (Erwinia carotovora subsp. atroseptica), this protein is Cell division protein ZipA.